We begin with the raw amino-acid sequence, 417 residues long: Calreticulin (417 aa).

The signal sequence occupies residues 1-17 (MLLPVPLLLGLVGLAAA). The interval 18 to 197 (EPTIYFKEQF…NSQVESGSLE (180 aa)) is N-domain. Ca(2+)-binding residues include Gln26, Lys62, and Lys64. Lys64 bears the N6-(2-hydroxyisobutyryl)lysine mark. An alpha-D-glucoside-binding residues include Tyr109, Lys111, Tyr128, and Asp135. Residues Cys137 and Cys163 are joined by a disulfide bond. N6-acetyllysine is present on Lys159. The stretch at 191 to 202 (VESGSLEDDWDF) is one 1-1 repeat. Positions 191 to 255 (VESGSLEDDW…DAKKPEDWDE (65 aa)) are 4 X approximate repeats. The disordered stretch occupies residues 193 to 277 (SGSLEDDWDF…NPEYKGEWKP (85 aa)). A P-domain region spans residues 198–308 (DDWDFLPPKK…YSPDSNIYAY (111 aa)). A compositionally biased stretch (basic and acidic residues) spans 207–251 (KIKDPDAVKPEDWDERAKIDDPTDSKPEDWDKPEHIPDPDAKKPE). Lys209 carries the N6-acetyllysine modification. Repeat copies occupy residues 210–221 (DPDAVKPEDWDE), 227–238 (DPTDSKPEDWDK), 244–255 (DPDAKKPEDWDE), 259–269 (GEWEPPVIQNP), 273–283 (GEWKPRQIDNP), and 287–297 (GTWIHPEIDNP). The interval 237–270 (DKPEHIPDPDAKKPEDWDEEMDGEWEPPVIQNPE) is interaction with PPIB. The span at 252–261 (DWDEEMDGEW) shows a compositional bias: acidic residues. The segment at 259–297 (GEWEPPVIQNPEYKGEWKPRQIDNPDYKGTWIHPEIDNP) is 3 X approximate repeats. The tract at residues 309-417 (ENFAVLGLDL…AAAGQAKDEL (109 aa)) is C-domain. Asp317 is an an alpha-D-glucoside binding site. Position 328 (Asp328) interacts with Ca(2+). The interval 350–417 (TKAAEKQMKD…AAAGQAKDEL (68 aa)) is disordered. Basic and acidic residues predominate over residues 352 to 379 (AAEKQMKDKQDEEQRLKEEEEEKKRKEE). Over residues 380-408 (EEVDKEDEEDKDEDEEEEDEKEEEEEEDA) the composition is skewed to acidic residues. Positions 414 to 417 (KDEL) match the Prevents secretion from ER motif.

The protein belongs to the calreticulin family. As to quaternary structure, monomer. Component of an EIF2 complex at least composed of CELF1/CUGBP1, CALR, CALR3, EIF2S1, EIF2S2, HSP90B1 and HSPA5. Interacts with PDIA3/ERp57 and SPACA9. Interacts with TRIM21. Interacts with NR3C1. Interacts with PPIB. Interacts (via P-domain) with PDIA5. Interacts with CLCC1. As to expression, in blastocyst expressed in all blastomeres (at protein level). In embryos, expressed in spleen, kidney, liver, fat, muscle, ovary, granulosa cells and cumulus cells.

Its subcellular location is the endoplasmic reticulum lumen. The protein localises to the cytoplasm. It is found in the cytosol. It localises to the secreted. The protein resides in the extracellular space. Its subcellular location is the extracellular matrix. The protein localises to the cell surface. It is found in the sarcoplasmic reticulum lumen. It localises to the cytoplasmic vesicle. The protein resides in the secretory vesicle. Its subcellular location is the cortical granule. The protein localises to the cytolytic granule. Functionally, calcium-binding chaperone that promotes folding, oligomeric assembly and quality control in the endoplasmic reticulum (ER) via the calreticulin/calnexin cycle. This lectin interacts transiently with almost all of the monoglucosylated glycoproteins that are synthesized in the ER. Interacts with the DNA-binding domain of NR3C1 and mediates its nuclear export. Involved in maternal gene expression regulation. May participate in oocyte maturation via the regulation of calcium homeostasis. Present in the cortical granules of non-activated oocytes, is exocytosed during the cortical reaction in response to oocyte activation and might participate in the block to polyspermy. This Sus scrofa (Pig) protein is Calreticulin (CALR).